Here is a 62-residue protein sequence, read N- to C-terminus: LKCHNTQLPFIYKTCPEGKNLCFKTTLKKLPLKIPIKRGCAATCPKSSALLKVVCCSTDKCN.

4 disulfides stabilise this stretch: Cys3/Cys22, Cys15/Cys40, Cys44/Cys55, and Cys56/Cys61.

This sequence belongs to the three-finger toxin family. Short-chain subfamily. Orphan group XV sub-subfamily. In terms of tissue distribution, expressed by the venom gland.

The protein resides in the secreted. It is found in the target cell membrane. Has low cytotoxic activity. This Naja annulifera (Banded Egyptian cobra) protein is Cytotoxin 11.